Consider the following 478-residue polypeptide: 3-ketoacyl-CoA synthase 3 (478 aa).

The N-terminal stretch at 1-25 (MDLLVMLLSLLVSYLIFKIWKRIDS) is a signal peptide. Positions 26–313 (KRDQNCYILD…FMLCLLLKKL (288 aa)) constitute an FAE domain. Catalysis depends on residues Cys168, His247, His345, His349, His378, and Asn382.

It belongs to the thiolase-like superfamily. Chalcone/stilbene synthases family. As to expression, expressed in siliques, leaves, stems and seedlings.

It localises to the endoplasmic reticulum. The enzyme catalyses a very-long-chain acyl-CoA + malonyl-CoA + H(+) = a very-long-chain 3-oxoacyl-CoA + CO2 + CoA. It participates in lipid metabolism; fatty acid biosynthesis. The sequence is that of 3-ketoacyl-CoA synthase 3 from Arabidopsis thaliana (Mouse-ear cress).